Reading from the N-terminus, the 1061-residue chain is Bifunctional cytochrome P450/NADPH--P450 reductase 1 (1061 aa).

The segment at 1-475 (MKETSPIPQP…AEKAAPDEQK (475 aa)) is cytochrome P450. Cys-403 lines the heme pocket. The segment at 476–1061 (EKTEAKGASV…MYAKDVWAGI (586 aa)) is NADPH--P450 reductase. The region spanning 493–632 (LLVLYGSDTG…QLDEWKKSMW (140 aa)) is the Flavodoxin-like domain. Residues 499–504 (SDTGTA), 546–549 (SYNG), 580–582 (CGD), and 588–590 (TYQ) each bind FMN. The FAD-binding FR-type domain maps to 671–904 (YEASHASIAE…RTPESRFQLP (234 aa)).

It in the N-terminal section; belongs to the cytochrome P450 family. FAD serves as cofactor. It depends on FMN as a cofactor. The cofactor is heme b.

The protein localises to the cytoplasm. It catalyses the reaction an organic molecule + reduced [NADPH--hemoprotein reductase] + O2 = an alcohol + oxidized [NADPH--hemoprotein reductase] + H2O + H(+). The enzyme catalyses 2 oxidized [cytochrome P450] + NADPH = 2 reduced [cytochrome P450] + NADP(+) + H(+). Functions as a fatty acid monooxygenase. Catalyzes hydroxylation of a range of long-chain fatty acids, with a preference for long-chain unsaturated and branched-chain fatty acids over saturated fatty acids. Hydroxylation of myristic acid occurs mainly at the omega-2 position. Also displays a NADPH-dependent reductase activity in the C-terminal domain, which allows electron transfer from NADPH to the heme iron of the cytochrome P450 N-terminal domain. Is also able to catalyze efficient oxidation of sodium dodecyl sulfate (SDS). The sequence is that of Bifunctional cytochrome P450/NADPH--P450 reductase 1 from Bacillus subtilis (strain 168).